Consider the following 240-residue polypeptide: Large ribosomal subunit protein uL2 (240 aa).

The segment covering 1–12 (MGRRIQGQRRGR) has biased composition (basic residues). Disordered stretches follow at residues 1-21 (MGRRIQGQRRGRGGPTFRAPS) and 198-240 (VDHP…GSNK). Positions 221–231 (PPGRKVGDIAS) are enriched in basic and acidic residues.

Belongs to the universal ribosomal protein uL2 family. In terms of assembly, part of the 50S ribosomal subunit. Forms a bridge to the 30S subunit in the 70S ribosome.

One of the primary rRNA binding proteins. Required for association of the 30S and 50S subunits to form the 70S ribosome, for tRNA binding and peptide bond formation. It has been suggested to have peptidyltransferase activity; this is somewhat controversial. Makes several contacts with the 16S rRNA in the 70S ribosome. The sequence is that of Large ribosomal subunit protein uL2 from Halorubrum lacusprofundi (strain ATCC 49239 / DSM 5036 / JCM 8891 / ACAM 34).